Consider the following 487-residue polypeptide: Bifunctional protein HldE (487 aa).

A ribokinase region spans residues M1–G326. N205 to E208 is an ATP binding site. D275 is an active-site residue. The interval F356 to Y487 is cytidylyltransferase.

In the N-terminal section; belongs to the carbohydrate kinase PfkB family. The protein in the C-terminal section; belongs to the cytidylyltransferase family. As to quaternary structure, homodimer.

It carries out the reaction D-glycero-beta-D-manno-heptose 7-phosphate + ATP = D-glycero-beta-D-manno-heptose 1,7-bisphosphate + ADP + H(+). The catalysed reaction is D-glycero-beta-D-manno-heptose 1-phosphate + ATP + H(+) = ADP-D-glycero-beta-D-manno-heptose + diphosphate. It participates in nucleotide-sugar biosynthesis; ADP-L-glycero-beta-D-manno-heptose biosynthesis; ADP-L-glycero-beta-D-manno-heptose from D-glycero-beta-D-manno-heptose 7-phosphate: step 1/4. It functions in the pathway nucleotide-sugar biosynthesis; ADP-L-glycero-beta-D-manno-heptose biosynthesis; ADP-L-glycero-beta-D-manno-heptose from D-glycero-beta-D-manno-heptose 7-phosphate: step 3/4. Its function is as follows. Catalyzes the phosphorylation of D-glycero-D-manno-heptose 7-phosphate at the C-1 position to selectively form D-glycero-beta-D-manno-heptose-1,7-bisphosphate. In terms of biological role, catalyzes the ADP transfer from ATP to D-glycero-beta-D-manno-heptose 1-phosphate, yielding ADP-D-glycero-beta-D-manno-heptose. This Citrifermentans bemidjiense (strain ATCC BAA-1014 / DSM 16622 / JCM 12645 / Bem) (Geobacter bemidjiensis) protein is Bifunctional protein HldE.